Consider the following 442-residue polypeptide: Probable alpha-galactosidase B (442 aa).

Positions 1–19 (MQRYISLSVSLSLLSGANA) are cleaved as a signal peptide. 2 disulfide bridges follow: Cys-42-Cys-74 and Cys-124-Cys-154. The active-site Nucleophile is the Asp-152. 4 N-linked (GlcNAc...) asparagine glycosylation sites follow: Asn-159, Asn-173, Asn-179, and Asn-215. Residue 224–228 (EWGQA) participates in substrate binding. The N-linked (GlcNAc...) asparagine glycan is linked to Asn-235. Asp-246 acts as the Proton donor in catalysis. Residue Asn-285 is glycosylated (N-linked (GlcNAc...) asparagine).

This sequence belongs to the glycosyl hydrolase 27 family.

Its subcellular location is the secreted. It carries out the reaction Hydrolysis of terminal, non-reducing alpha-D-galactose residues in alpha-D-galactosides, including galactose oligosaccharides, galactomannans and galactolipids.. In terms of biological role, hydrolyzes a variety of simple alpha-D-galactoside as well as more complex molecules such as oligosaccharides and polysaccharides. In Aspergillus oryzae (strain ATCC 42149 / RIB 40) (Yellow koji mold), this protein is Probable alpha-galactosidase B (aglB).